The chain runs to 502 residues: ATP synthase subunit alpha (502 aa).

The interval 115 to 136 (VDGLGPIHTTKTRPIESPAPGV) is disordered. 169 to 176 (GDRQTGKT) provides a ligand contact to ATP.

The protein belongs to the ATPase alpha/beta chains family. F-type ATPases have 2 components, CF(1) - the catalytic core - and CF(0) - the membrane proton channel. CF(1) has five subunits: alpha(3), beta(3), gamma(1), delta(1), epsilon(1). CF(0) has three main subunits: a(1), b(2) and c(9-12). The alpha and beta chains form an alternating ring which encloses part of the gamma chain. CF(1) is attached to CF(0) by a central stalk formed by the gamma and epsilon chains, while a peripheral stalk is formed by the delta and b chains.

Its subcellular location is the cell membrane. The enzyme catalyses ATP + H2O + 4 H(+)(in) = ADP + phosphate + 5 H(+)(out). Its function is as follows. Produces ATP from ADP in the presence of a proton gradient across the membrane. The alpha chain is a regulatory subunit. This chain is ATP synthase subunit alpha, found in Bacillus cytotoxicus (strain DSM 22905 / CIP 110041 / 391-98 / NVH 391-98).